Here is a 150-residue protein sequence, read N- to C-terminus: Heat shock protein beta-3 (150 aa).

Positions 47-150 constitute a sHSP domain; sequence KTRAAQSPPV…VEVKDPVGTK (104 aa).

Belongs to the small heat shock protein (HSP20) family.

The protein localises to the cytoplasm. Its subcellular location is the nucleus. Functionally, inhibitor of actin polymerization. This chain is Heat shock protein beta-3 (HSPB3), found in Homo sapiens (Human).